Reading from the N-terminus, the 724-residue chain is Catalase-peroxidase (724 aa).

A cross-link (tryptophyl-tyrosyl-methioninium (Trp-Tyr) (with M-252)) is located at residues 98–226 (WHSAGTYRIA…LATVMMGLIY (129 aa)). The active-site Proton acceptor is the H99. A cross-link (tryptophyl-tyrosyl-methioninium (Tyr-Met) (with W-98)) is located at residues 226-252 (YVNPEGVDGNPDPLKTAQDMRVTFARM). Heme b is bound at residue H267.

This sequence belongs to the peroxidase family. Peroxidase/catalase subfamily. In terms of assembly, homodimer or homotetramer. Heme b is required as a cofactor. Post-translationally, formation of the three residue Trp-Tyr-Met cross-link is important for the catalase, but not the peroxidase activity of the enzyme.

The catalysed reaction is H2O2 + AH2 = A + 2 H2O. It carries out the reaction 2 H2O2 = O2 + 2 H2O. Bifunctional enzyme with both catalase and broad-spectrum peroxidase activity. The polypeptide is Catalase-peroxidase (Vibrio cholerae serotype O1 (strain ATCC 39541 / Classical Ogawa 395 / O395)).